Consider the following 477-residue polypeptide: Diphthine methyltransferase (477 aa).

WD repeat units follow at residues 194 to 232 (HFEA…TPVF), 236 to 276 (RHCM…QPLA), and 422 to 464 (VKTR…ARTL).

The protein belongs to the DPH7 family. Interacts with INCA1.

The catalysed reaction is diphthine methyl ester-[translation elongation factor 2] + H2O = diphthine-[translation elongation factor 2] + methanol + H(+). Its pathway is protein modification; peptidyl-diphthamide biosynthesis. In terms of biological role, catalyzes the demethylation of diphthine methyl ester to form diphthine, an intermediate diphthamide biosynthesis, a post-translational modification of histidine which occurs in translation elongation factor 2 (EEF2). The polypeptide is Diphthine methyltransferase (Dph7) (Mus musculus (Mouse)).